A 1807-amino-acid chain; its full sequence is Vitellogenin-A2 (1807 aa).

An N-terminal signal peptide occupies residues 1–15; sequence MKGIVLALLLALAGS. The region spanning 24–664 is the Vitellogenin domain; it reads FSESKISVYN…SANTMFPVFI (641 aa). The tract at residues 953 to 974 is disordered; it reads TSAEGASMMEDSSEMGPKKYSA. Asn1094 is a glycosylation site (N-linked (GlcNAc...) asparagine). The tract at residues 1095–1320 is disordered; the sequence is ETALYRSKQK…SSESSSSSSE (226 aa). Over residues 1101–1111 the composition is skewed to basic residues; the sequence is SKQKKKNKIHN. Residues 1112-1123 are compositionally biased toward basic and acidic residues; that stretch reads RRLDAEVVEARK. A compositionally biased stretch (low complexity) spans 1126–1163; sequence SSLSSSSSSSSSSSSSSSSSSSSSSSSSPSSSSSSSYS. A compositionally biased stretch (basic and acidic residues) spans 1187-1198; the sequence is QNKKRNLQENRK. The segment covering 1205–1232 has biased composition (low complexity); that stretch reads SSSSSSSSSSSSSSSSSSSSSSSSSSSS. The segment covering 1233–1247 has biased composition (basic and acidic residues); sequence EENRPHKNRQHDNKQ. Low complexity-rich tracts occupy residues 1263–1276 and 1309–1320; these read SESS…SSSE and SSSSESSSSSSE. The VWFD domain occupies 1536 to 1714; that stretch reads GECKVAQDQI…SWILPAESCS (179 aa). 2 disulfide bridges follow: Cys1538–Cys1677 and Cys1561–Cys1713.

Produced by the liver, secreted into the blood and then sequestered by receptor mediated endocytosis into growing oocytes, where it is generally cleaved, giving rise to the respective yolk components.

Precursor of the major egg-yolk proteins that are sources of nutrients during early development of oviparous organisms. This chain is Vitellogenin-A2, found in Xenopus laevis (African clawed frog).